The sequence spans 1151 residues: SCF E3 ubiquitin ligase complex F-box protein GRR1 (1151 aa).

Basic and acidic residues predominate over residues 1 to 18 (MDQDNNNHNDSNRLHPPD). Positions 1–72 (MDQDNNNHND…ATSERNASEV (72 aa)) are disordered. The segment covering 38-49 (NNNNNNNNNNNN) has biased composition (low complexity). Residues 58–72 (RTRETATSERNASEV) are compositionally biased toward basic and acidic residues. Residues S199 and S300 each carry the phosphoserine modification. An F-box domain is found at 314–361 (VFALNMLPSEILHLILDKLNQKYDIVKFLTVSKLWAEIIVKILYYRPH). LRR repeat units lie at residues 399–423 (GDYM…TLVF), 424–449 (CKHI…DITG), 450–475 (IRDV…YVPQ), 476–501 (ARNV…KITA), 502–527 (NNNM…DITL), 528–553 (SPNV…RITH), 554–582 (NTNI…DLSG), 583–608 (CENI…FLGK), 609–634 (CSRI…HFGH), 635–660 (CFNI…DFAC), 661–685 (CTNL…GLVK), 686–714 (CTQM…HLSY), and 715–740 (CSNL…SLTA). Low complexity predominate over residues 1066 to 1080 (AGANDTSNNETNNGN). Disordered regions lie at residues 1066–1090 (AGAN…NPNF) and 1118–1151 (VRNN…EDML).

As to quaternary structure, interacts with SKP1. Component of the probable SCF(GRR1) complex containing CDC53, SKP1, RBX1 and GRR1.

Its subcellular location is the membrane. Its pathway is protein modification; protein ubiquitination. Functionally, substrate recognition component of a SCF (SKP1-CUL1-F-box protein) E3 ubiquitin-protein ligase complex which mediates the ubiquitination and subsequent proteasomal degradation of target proteins. Recognizes and directs ubiquitination of phosphorylated CLN1, CLN2 and GIC2. Probably constitutes the primary response element required for the generation or interpretation of the signal that induces glucose repression. The sequence is that of SCF E3 ubiquitin ligase complex F-box protein GRR1 (GRR1) from Saccharomyces cerevisiae (strain ATCC 204508 / S288c) (Baker's yeast).